The sequence spans 543 residues: Nucleoside-triphosphatase ntp-1 (543 aa).

The chain crosses the membrane as a helical span at residues 40-60 (VYGFLLTCTCLLLILTIIPMS). The Proton acceptor role is filled by Glu212. A helical transmembrane segment spans residues 497 to 517 (QISNFFSFFVILIIVLAVALY).

Belongs to the GDA1/CD39 NTPase family.

The protein resides in the golgi apparatus membrane. It catalyses the reaction a ribonucleoside 5'-triphosphate + H2O = a ribonucleoside 5'-diphosphate + phosphate + H(+). In terms of biological role, seems to be able to hydrolyze CTP, ATP and UTP. The sequence is that of Nucleoside-triphosphatase ntp-1 from Caenorhabditis elegans.